Consider the following 382-residue polypeptide: MNNINKIFITFLCIELIIGGGGRLLEPLGIFPLRYLLFVFSFILLIFNLVTFNFSITQKCVSLFIWLLLFPFYGFFVGLLAGNKINDILFDVQPYLFMLSLIYLFTLRYTLKVFSCEIFIKIVNAFALYGSLLYISYIILLNFGLLNFNLIYEHLSLTSEFFFRPDGAFFSKSFYFFGVGAIISFVDKKYLKCLIIVLAILLTESRGVLLFTTLSLLLASFKLHKLYLNTIIIILGSVLFIIMLYMVGSRSEDSDSVRFNDLYFYYKNVDLATFLFGRGFGSFILDRLRIEIVPLEILQKTGVIGVFISLVPMLLIFLKGYFLNSTKTSLMMSLILFFSITVSITNPFLFTPMGIFIIGVVVLWVFSIENIQISNNLTSGAK.

Over 1–3 (MNN) the chain is Cytoplasmic. The helical transmembrane segment at 4–22 (INKIFITFLCIELIIGGGG) threads the bilayer. At 23–34 (RLLEPLGIFPLR) the chain is on the periplasmic side. The chain crosses the membrane as a helical span at residues 35 to 54 (YLLFVFSFILLIFNLVTFNF). Over 55 to 62 (SITQKCVS) the chain is Cytoplasmic. The helical transmembrane segment at 63–81 (LFIWLLLFPFYGFFVGLLA) threads the bilayer. The Periplasmic portion of the chain corresponds to 82–94 (GNKINDILFDVQP). The chain crosses the membrane as a helical span at residues 95 to 112 (YLFMLSLIYLFTLRYTLK). Residues 113–125 (VFSCEIFIKIVNA) lie on the Cytoplasmic side of the membrane. The chain crosses the membrane as a helical span at residues 126–146 (FALYGSLLYISYIILLNFGLL). Residues 147 to 167 (NFNLIYEHLSLTSEFFFRPDG) are Periplasmic-facing. The chain crosses the membrane as a helical span at residues 168-187 (AFFSKSFYFFGVGAIISFVD). Over 188–189 (KK) the chain is Cytoplasmic. A helical membrane pass occupies residues 190–206 (YLKCLIIVLAILLTESR). Residues 207–208 (GV) lie on the Periplasmic side of the membrane. The chain crosses the membrane as a helical span at residues 209 to 226 (LLFTTLSLLLASFKLHKL). The Cytoplasmic segment spans residues 227–229 (YLN). The helical transmembrane segment at 230 to 247 (TIIIILGSVLFIIMLYMV) threads the bilayer. Residues 248-300 (GSRSEDSDSVRFNDLYFYYKNVDLATFLFGRGFGSFILDRLRIEIVPLEILQK) are Periplasmic-facing. The chain crosses the membrane as a helical span at residues 301 to 318 (TGVIGVFISLVPMLLIFL). Residues 319–329 (KGYFLNSTKTS) lie on the Cytoplasmic side of the membrane. A helical membrane pass occupies residues 330–349 (LMMSLILFFSITVSITNPFL). Residues 350–352 (FTP) lie on the Periplasmic side of the membrane. A helical membrane pass occupies residues 353-370 (MGIFIIGVVVLWVFSIEN). At 371 to 382 (IQISNNLTSGAK) the chain is on the cytoplasmic side.

The protein resides in the cell inner membrane. The enzyme catalyses n lipid-linked O-antigen repeat units = a lipid-linked O antigen + (n-1) polyisoprenyl diphosphate.. The protein operates within bacterial outer membrane biogenesis; LPS O-antigen biosynthesis. Its function is as follows. Polymerase involved in the biosynthesis of the lipopolysaccharide (LPS). Catalyzes the polymerization of the O-antigen repeat units on the periplasmic face of the inner membrane, leading to the formation of the lipid-linked O-antigen molecule. In Shigella flexneri, this protein is O-antigen polymerase.